A 190-amino-acid chain; its full sequence is dITP/XTP pyrophosphatase (190 aa).

A substrate-binding site is contributed by 10–15 (TTNKHK). 2 residues coordinate Mg(2+): glutamate 39 and aspartate 68. The active-site Proton acceptor is aspartate 68. Residues alanine 69, 143 to 146 (FGYD), lysine 166, and 171 to 172 (HR) contribute to the substrate site.

Belongs to the HAM1 NTPase family. In terms of assembly, homodimer. Mg(2+) serves as cofactor.

It catalyses the reaction XTP + H2O = XMP + diphosphate + H(+). The catalysed reaction is dITP + H2O = dIMP + diphosphate + H(+). It carries out the reaction ITP + H2O = IMP + diphosphate + H(+). Pyrophosphatase that catalyzes the hydrolysis of nucleoside triphosphates to their monophosphate derivatives, with a high preference for the non-canonical purine nucleotides XTP (xanthosine triphosphate), dITP (deoxyinosine triphosphate) and ITP. Seems to function as a house-cleaning enzyme that removes non-canonical purine nucleotides from the nucleotide pool, thus preventing their incorporation into DNA/RNA and avoiding chromosomal lesions. The sequence is that of dITP/XTP pyrophosphatase from Hyperthermus butylicus (strain DSM 5456 / JCM 9403 / PLM1-5).